A 331-amino-acid chain; its full sequence is Ketol-acid reductoisomerase (NADP(+)) (331 aa).

The KARI N-terminal Rossmann domain occupies Ala3–Thr183. NADP(+) is bound by residues Tyr26–Gln29, Ser52, and Ser54. His109 is a catalytic residue. Residue Gly135 coordinates NADP(+). The KARI C-terminal knotted domain maps to Thr184 to Leu329. Mg(2+)-binding residues include Asp192, Glu196, Glu228, and Glu232. Residue Ser253 participates in substrate binding.

Belongs to the ketol-acid reductoisomerase family. Requires Mg(2+) as cofactor.

It catalyses the reaction (2R)-2,3-dihydroxy-3-methylbutanoate + NADP(+) = (2S)-2-acetolactate + NADPH + H(+). It carries out the reaction (2R,3R)-2,3-dihydroxy-3-methylpentanoate + NADP(+) = (S)-2-ethyl-2-hydroxy-3-oxobutanoate + NADPH + H(+). It participates in amino-acid biosynthesis; L-isoleucine biosynthesis; L-isoleucine from 2-oxobutanoate: step 2/4. Its pathway is amino-acid biosynthesis; L-valine biosynthesis; L-valine from pyruvate: step 2/4. Involved in the biosynthesis of branched-chain amino acids (BCAA). Catalyzes an alkyl-migration followed by a ketol-acid reduction of (S)-2-acetolactate (S2AL) to yield (R)-2,3-dihydroxy-isovalerate. In the isomerase reaction, S2AL is rearranged via a Mg-dependent methyl migration to produce 3-hydroxy-3-methyl-2-ketobutyrate (HMKB). In the reductase reaction, this 2-ketoacid undergoes a metal-dependent reduction by NADPH to yield (R)-2,3-dihydroxy-isovalerate. The chain is Ketol-acid reductoisomerase (NADP(+)) from Thermobifida fusca (strain YX).